A 91-amino-acid chain; its full sequence is Cell division topological specificity factor (91 aa).

Belongs to the MinE family.

Its function is as follows. Prevents the cell division inhibition by proteins MinC and MinD at internal division sites while permitting inhibition at polar sites. This ensures cell division at the proper site by restricting the formation of a division septum at the midpoint of the long axis of the cell. The protein is Cell division topological specificity factor of Gloeobacter violaceus (strain ATCC 29082 / PCC 7421).